Here is a 684-residue protein sequence, read N- to C-terminus: Translation factor GUF1 homolog, mitochondrial (684 aa).

Positions 82–270 (HLIRNFSIIA…AVIERIPQPK (189 aa)) constitute a tr-type G domain. GTP contacts are provided by residues 91 to 98 (AHVDHGKS), 163 to 167 (DTPGH), and 217 to 220 (NKID).

The protein belongs to the TRAFAC class translation factor GTPase superfamily. Classic translation factor GTPase family. LepA subfamily.

It localises to the mitochondrion inner membrane. The catalysed reaction is GTP + H2O = GDP + phosphate + H(+). In terms of biological role, promotes mitochondrial protein synthesis. May act as a fidelity factor of the translation reaction, by catalyzing a one-codon backward translocation of tRNAs on improperly translocated ribosomes. Binds to mitochondrial ribosomes in a GTP-dependent manner. This chain is Translation factor GUF1 homolog, mitochondrial, found in Physcomitrium patens (Spreading-leaved earth moss).